A 430-amino-acid polypeptide reads, in one-letter code: CinA-like protein (430 aa).

Belongs to the CinA family.

This is CinA-like protein from Prochlorococcus marinus (strain NATL2A).